Reading from the N-terminus, the 167-residue chain is Nascent polypeptide-associated complex subunit beta (167 aa).

Disordered stretches follow at residues 1 to 48 (MDQA…GADD) and 133 to 167 (QNMQ…SKVE). Residues 25–42 (NRNRGKGTPRRKVKKVHK) show a composition bias toward basic residues. An NAC-A/B domain is found at 45–110 (GADDKKLQAT…GEEKELTELV (66 aa)). Residues 148 to 161 (DEEDDIPDLVEGQD) show a composition bias toward acidic residues.

The protein belongs to the NAC-beta family. As to quaternary structure, part of the nascent polypeptide-associated complex (NAC), consisting of egd2 and egd1. NAC associates with ribosomes via egd1.

The protein resides in the cytoplasm. Its subcellular location is the nucleus. Its function is as follows. Component of the nascent polypeptide-associated complex (NAC), a dynamic component of the ribosomal exit tunnel, protecting the emerging polypeptides from interaction with other cytoplasmic proteins to ensure appropriate nascent protein targeting. The NAC complex also promotes mitochondrial protein import by enhancing productive ribosome interactions with the outer mitochondrial membrane and blocks the inappropriate interaction of ribosomes translating non-secretory nascent polypeptides with translocation sites in the membrane of the endoplasmic reticulum. EGD1 may act as a transcription factor that exert a negative effect on the expression of several genes that are transcribed by RNA polymerase II. In Aspergillus terreus (strain NIH 2624 / FGSC A1156), this protein is Nascent polypeptide-associated complex subunit beta (egd1).